Consider the following 82-residue polypeptide: Beta-insect depressant toxin LqqIT2 (82 aa).

The signal sequence occupies residues 1-21 (MKLLLLLIVSASMLIESLVNA). The LCN-type CS-alpha/beta domain occupies 22 to 82 (DGYIRKRDGC…TWKSETNTCG (61 aa)). Disulfide bonds link cysteine 31–cysteine 81, cysteine 35–cysteine 56, cysteine 42–cysteine 63, and cysteine 46–cysteine 65.

It belongs to the long (4 C-C) scorpion toxin superfamily. Sodium channel inhibitor family. Beta subfamily. In terms of tissue distribution, expressed by the venom gland.

The protein resides in the secreted. Its function is as follows. Depressant insect beta-toxins cause a transient contraction paralysis followed by a slow flaccid paralysis. They bind voltage-independently at site-4 of sodium channels and shift the voltage of activation toward more negative potentials thereby affecting sodium channel activation and promoting spontaneous and repetitive firing. Aside from typical beta-toxin effects, this toxin also affects the inactivation process and ion selectivity of the insect voltage-gated sodium channel. This toxin is active only on insects. Is active on the insect voltage-gated sodium channel para. In vivo, when injected intraperitoneally, it exhibits analgesic activity, increasing hot plate and tail flick withdrawal latencies in a dose-dependent fashion. This phenomenon might be partly due to an inhibitory mechanism activated by noxious stimuli. The sequence is that of Beta-insect depressant toxin LqqIT2 from Leiurus quinquestriatus quinquestriatus (Egyptian scorpion).